Reading from the N-terminus, the 729-residue chain is Fatty acid oxidation complex subunit alpha (729 aa).

The tract at residues 1 to 189 (MLYKGDTLYL…KIGLVDGVVK (189 aa)) is enoyl-CoA hydratase/isomerase. D296 serves as a coordination point for substrate. Residues 311-729 (ETPKQAAVLG…ARPVGDLKTA (419 aa)) form a 3-hydroxyacyl-CoA dehydrogenase region. Residues M324, D343, 400–402 (VVE), K407, and S429 each bind NAD(+). The For 3-hydroxyacyl-CoA dehydrogenase activity role is filled by H450. N453 contacts NAD(+). Substrate-binding residues include N500 and Y660. Positions 707–729 (ARHNEPYYPPVEPARPVGDLKTA) are disordered.

This sequence in the N-terminal section; belongs to the enoyl-CoA hydratase/isomerase family. In the C-terminal section; belongs to the 3-hydroxyacyl-CoA dehydrogenase family. As to quaternary structure, heterotetramer of two alpha chains (FadB) and two beta chains (FadA).

The enzyme catalyses a (3S)-3-hydroxyacyl-CoA + NAD(+) = a 3-oxoacyl-CoA + NADH + H(+). It catalyses the reaction a (3S)-3-hydroxyacyl-CoA = a (2E)-enoyl-CoA + H2O. The catalysed reaction is a 4-saturated-(3S)-3-hydroxyacyl-CoA = a (3E)-enoyl-CoA + H2O. It carries out the reaction (3S)-3-hydroxybutanoyl-CoA = (3R)-3-hydroxybutanoyl-CoA. The enzyme catalyses a (3Z)-enoyl-CoA = a 4-saturated (2E)-enoyl-CoA. It catalyses the reaction a (3E)-enoyl-CoA = a 4-saturated (2E)-enoyl-CoA. The protein operates within lipid metabolism; fatty acid beta-oxidation. In terms of biological role, involved in the aerobic and anaerobic degradation of long-chain fatty acids via beta-oxidation cycle. Catalyzes the formation of 3-oxoacyl-CoA from enoyl-CoA via L-3-hydroxyacyl-CoA. It can also use D-3-hydroxyacyl-CoA and cis-3-enoyl-CoA as substrate. In Escherichia coli O6:K15:H31 (strain 536 / UPEC), this protein is Fatty acid oxidation complex subunit alpha.